We begin with the raw amino-acid sequence, 664 residues long: ATP-dependent zinc metalloprotease FtsH (664 aa).

At 1–9 (MKQNIKRNW) the chain is on the cytoplasmic side. The helical transmembrane segment at 10-30 (IWILIVMIVIGIILYFSIRNL) threads the bilayer. The Extracellular segment spans residues 31–136 (FSTKVAEWSI…KSVATPQPNP (106 aa)). A helical transmembrane segment spans residues 137 to 157 (FLGILISSVPVLILIFVMVWI). At 158-664 (YRSQVKMMNG…SLIEKTSKKE (507 aa)) the chain is on the cytoplasmic side. Residue 229–236 (GPPGTGKT) coordinates ATP. A Zn(2+)-binding site is contributed by H451. The active site involves E452. Zn(2+) is bound by residues H455 and D529. The span at 639 to 649 (IEEKDLSKNSE) shows a compositional bias: basic and acidic residues. Residues 639–664 (IEEKDLSKNSEDNNLDSLIEKTSKKE) are disordered.

The protein in the central section; belongs to the AAA ATPase family. It in the C-terminal section; belongs to the peptidase M41 family. Homohexamer. Zn(2+) serves as cofactor.

The protein resides in the cell membrane. Acts as a processive, ATP-dependent zinc metallopeptidase for both cytoplasmic and membrane proteins. Plays a role in the quality control of integral membrane proteins. In Mycoplasmopsis synoviae (strain 53) (Mycoplasma synoviae), this protein is ATP-dependent zinc metalloprotease FtsH.